The following is a 394-amino-acid chain: MPDKFKRVHVVVMDSVGIGEAPDAAKFGDFDVDTFGHIAKHVGGLKMPEMGKLGLSNIREIEGIKKAEKPLAYYTKMQEASNGKDTMTGHWEIMGLYIDTPFRVFPDGFPDDLINQIEEKTGRKVIGNKPASGTEIMAELGEEHVKTGALIVYTSADSVLQIAAHEDVVPLEELYEICEFCRKITLDDPYMLGRIIARPFVGEPGAFVRTPNRHDYALKPFKPTVMDALKDGGKDVIAIGKISDIFDGEGVTESIRTKSNMDGMDQFIAVLDKDFNGMSFLNLVDFDALFGHRRDPQGYADALVDFDGRLVEVMEKLTDDDLLIITADHGNDPTYTGTDHTREFVPLLVYSPRFKNGGSELELRKTFADLGATVADNFDVKMPEYGTSFLRDLK.

The Mn(2+) site is built by D14, D287, H292, D328, H329, and H340.

It belongs to the phosphopentomutase family. Mn(2+) serves as cofactor.

It localises to the cytoplasm. The enzyme catalyses 2-deoxy-alpha-D-ribose 1-phosphate = 2-deoxy-D-ribose 5-phosphate. The catalysed reaction is alpha-D-ribose 1-phosphate = D-ribose 5-phosphate. The protein operates within carbohydrate degradation; 2-deoxy-D-ribose 1-phosphate degradation; D-glyceraldehyde 3-phosphate and acetaldehyde from 2-deoxy-alpha-D-ribose 1-phosphate: step 1/2. Its function is as follows. Isomerase that catalyzes the conversion of deoxy-ribose 1-phosphate (dRib-1-P) and ribose 1-phosphate (Rib-1-P) to deoxy-ribose 5-phosphate (dRib-5-P) and ribose 5-phosphate (Rib-5-P), respectively. In Listeria monocytogenes serovar 1/2a (strain ATCC BAA-679 / EGD-e), this protein is Phosphopentomutase.